The primary structure comprises 490 residues: Thyroid hormone receptor alpha (490 aa).

The interval 1–32 (MEQKPSKVECGSDPEENSARSPDGKRKRKNGQ) is disordered. The segment at 1 to 52 (MEQKPSKVECGSDPEENSARSPDGKRKRKNGQCSLKTSMSGYIPSYLDKDEQ) is modulating. Positions 53, 56, 70, 73, 91, 97, 107, and 110 each coordinate Zn(2+). 2 consecutive NR C4-type zinc fingers follow at residues 53–73 (CVVCGDKATGYHYRCITCEGC) and 91–115 (CKYDSCCVIDKITRNQCQLCRFKKC). Positions 53–127 (CVVCGDKATG…VGMAMDLVLD (75 aa)) form a DNA-binding region, nuclear receptor. Positions 163–407 (EEWDLIHIAT…EGQQLLGMHV (245 aa)) constitute an NR LBD domain. 3,3',5-triiodo-L-thyronine-binding residues include Arg228 and Ser277. The interval 457–490 (AVCGEDDSSEADSPSSSEEEPEVCEDLAGNAASP) is disordered.

The protein belongs to the nuclear hormone receptor family. NR1 subfamily. Binds DNA as a dimer; homodimer and heterodimer with RXRB. Interacts with NCOA3 and NCOA6 coactivators, leading to a strong increase of transcription of target genes. Probably interacts with SFPQ. Interacts with C1D. Interacts with AKAP13. Interacts with TP53INP2. Interacts with PER2. Isoform alpha-2 and isoform alpha-1 interact with TACC1, but the interaction with alpha-1 is weaker. The interaction with isoform alpha-1, but not alpha-2, is decreased in the presence of thyroid hormone T3.

It is found in the nucleus. The protein resides in the cytoplasm. Nuclear hormone receptor that can act as a repressor or activator of transcription. High affinity receptor for thyroid hormones, including triiodothyronine and thyroxine. In terms of biological role, does not bind thyroid hormone and functions as a weak dominant negative inhibitor of thyroid hormone action. This Homo sapiens (Human) protein is Thyroid hormone receptor alpha (THRA).